The sequence spans 339 residues: tRNA dimethylallyltransferase (339 aa).

Position 36–43 (36–43 (GPTGSGKT)) interacts with ATP. 38–43 (TGSGKT) provides a ligand contact to substrate. The tract at residues 61–64 (DSMQ) is interaction with substrate tRNA.

Belongs to the IPP transferase family. In terms of assembly, monomer. Mg(2+) is required as a cofactor.

It carries out the reaction adenosine(37) in tRNA + dimethylallyl diphosphate = N(6)-dimethylallyladenosine(37) in tRNA + diphosphate. Functionally, catalyzes the transfer of a dimethylallyl group onto the adenine at position 37 in tRNAs that read codons beginning with uridine, leading to the formation of N6-(dimethylallyl)adenosine (i(6)A). The chain is tRNA dimethylallyltransferase from Chlamydia trachomatis serovar L2 (strain ATCC VR-902B / DSM 19102 / 434/Bu).